We begin with the raw amino-acid sequence, 197 residues long: Holliday junction branch migration complex subunit RuvA (197 aa).

The segment at 1 to 63 is domain I; that stretch reads MINKIHGKVI…ENELKLFGFL (63 aa). The tract at residues 64–139 is domain II; that stretch reads NSDEREIFKE…KLLINSELES (76 aa). Position 139 (S139) is a region of interest, flexible linker. Positions 140-197 are domain III; it reads TGLFRFKELEESIVSMGFDRKIVNSKIREAFNLAEFANLKDSEKEQFLFKEVLKRISN.

It belongs to the RuvA family. Homotetramer. Forms an RuvA(8)-RuvB(12)-Holliday junction (HJ) complex. HJ DNA is sandwiched between 2 RuvA tetramers; dsDNA enters through RuvA and exits via RuvB. An RuvB hexamer assembles on each DNA strand where it exits the tetramer. Each RuvB hexamer is contacted by two RuvA subunits (via domain III) on 2 adjacent RuvB subunits; this complex drives branch migration. In the full resolvosome a probable DNA-RuvA(4)-RuvB(12)-RuvC(2) complex forms which resolves the HJ.

It is found in the cytoplasm. Its function is as follows. The RuvA-RuvB-RuvC complex processes Holliday junction (HJ) DNA during genetic recombination and DNA repair, while the RuvA-RuvB complex plays an important role in the rescue of blocked DNA replication forks via replication fork reversal (RFR). RuvA specifically binds to HJ cruciform DNA, conferring on it an open structure. The RuvB hexamer acts as an ATP-dependent pump, pulling dsDNA into and through the RuvAB complex. HJ branch migration allows RuvC to scan DNA until it finds its consensus sequence, where it cleaves and resolves the cruciform DNA. In Borreliella burgdorferi (strain ATCC 35210 / DSM 4680 / CIP 102532 / B31) (Borrelia burgdorferi), this protein is Holliday junction branch migration complex subunit RuvA.